Here is a 928-residue protein sequence, read N- to C-terminus: Nitrogen network kinase 1 (928 aa).

Residues 1 to 12 (MFTSQRQLRQNG) are compositionally biased toward polar residues. Disordered regions lie at residues 1–43 (MFTS…SYGR) and 81–118 (HEHP…LELG). Residues 13–29 (SPMSSSRSSQHSSGTAS) are compositionally biased toward low complexity. 2 stretches are compositionally biased toward polar residues: residues 30–40 (PISDSPASNRS) and 86–107 (RSTL…SQVN). A phosphoserine mark is found at Ser-178 and Ser-179. Positions 374-394 (ANDDNINSRNTPNNSNDTYVN) are disordered. A compositionally biased stretch (low complexity) spans 375–391 (NDDNINSRNTPNNSNDT). Ser-405 and Ser-426 each carry phosphoserine. One can recognise a Protein kinase domain in the interval 449-912 (HRLGKIIGFG…WKLKRIEEVL (464 aa)). Residues 455–463 (IGFGAWGII) and Lys-478 contribute to the ATP site. Asp-580 (proton acceptor) is an active-site residue. Disordered stretches follow at residues 670–741 (ENRK…KYIG) and 767–813 (YDSP…SGSS). The span at 683–696 (VSSSSHSLKHLNQP) shows a compositional bias: polar residues. Ser-737 carries the phosphoserine modification. The residue at position 739 (Tyr-739) is a Phosphotyrosine. Residues 769-813 (SPDSSQSEISAASSSSSNLSSLSSSTKASAVTNSGVTTSSPSGSS) are compositionally biased toward low complexity.

The protein belongs to the protein kinase superfamily. Ser/Thr protein kinase family. In terms of assembly, interacts with URE2 and GDH2. Also interacts with the TORC1 kinase complex.

It localises to the cytoplasm. The enzyme catalyses L-seryl-[protein] + ATP = O-phospho-L-seryl-[protein] + ADP + H(+). It catalyses the reaction L-threonyl-[protein] + ATP = O-phospho-L-threonyl-[protein] + ADP + H(+). Its function is as follows. Serine/threonine-protein kinase involved in the phosphorylation of the NAD(+)-dependent glutamate dehydrogenase GDH2. When overexpressed, confers hypersensitivity to rapamycin and induces rapid nuclear accumulation of GLN3 to activate the transcription of nitrogen-regulated genes. The chain is Nitrogen network kinase 1 (NNK1) from Saccharomyces cerevisiae (strain ATCC 204508 / S288c) (Baker's yeast).